The sequence spans 302 residues: tRNA-cytidine(32) 2-sulfurtransferase (302 aa).

A PP-loop motif motif is present at residues 44–49 (SGGKDS). [4Fe-4S] cluster-binding residues include cysteine 119, cysteine 122, and cysteine 210.

Belongs to the TtcA family. As to quaternary structure, homodimer. Mg(2+) serves as cofactor. The cofactor is [4Fe-4S] cluster.

The protein localises to the cytoplasm. The catalysed reaction is cytidine(32) in tRNA + S-sulfanyl-L-cysteinyl-[cysteine desulfurase] + AH2 + ATP = 2-thiocytidine(32) in tRNA + L-cysteinyl-[cysteine desulfurase] + A + AMP + diphosphate + H(+). The protein operates within tRNA modification. Functionally, catalyzes the ATP-dependent 2-thiolation of cytidine in position 32 of tRNA, to form 2-thiocytidine (s(2)C32). The sulfur atoms are provided by the cysteine/cysteine desulfurase (IscS) system. This chain is tRNA-cytidine(32) 2-sulfurtransferase, found in Teredinibacter turnerae (strain ATCC 39867 / T7901).